We begin with the raw amino-acid sequence, 83 residues long: Glutaredoxin 3 (83 aa).

Residues 2-83 (ANVEIYTKET…ARGGLDPLLK (82 aa)) enclose the Glutaredoxin domain. Cys12 and Cys15 are joined by a disulfide.

The protein belongs to the glutaredoxin family. Monomer.

Functionally, the disulfide bond functions as an electron carrier in the glutathione-dependent synthesis of deoxyribonucleotides by the enzyme ribonucleotide reductase. In addition, it is also involved in reducing some disulfides in a coupled system with glutathione reductase. The protein is Glutaredoxin 3 (grxC) of Escherichia coli O157:H7.